The sequence spans 211 residues: Probable nicotinate-nucleotide adenylyltransferase (211 aa).

This sequence belongs to the NadD family.

The catalysed reaction is nicotinate beta-D-ribonucleotide + ATP + H(+) = deamido-NAD(+) + diphosphate. It participates in cofactor biosynthesis; NAD(+) biosynthesis; deamido-NAD(+) from nicotinate D-ribonucleotide: step 1/1. Catalyzes the reversible adenylation of nicotinate mononucleotide (NaMN) to nicotinic acid adenine dinucleotide (NaAD). The protein is Probable nicotinate-nucleotide adenylyltransferase of Thermoanaerobacter sp. (strain X514).